The sequence spans 388 residues: MNSTDVTKGFTEQFGKQAEHTFFAPGRINLIGEHTDYNGGHVFPCAISLGTYAAVGTNEDNAFRLYSANFPKVGIIDIPFSDLFQDKRGLWTDYFQGMARVMKTAGANFTHGLNVYINGNLPDGAGLSSSASLEMLVGTILNSLFDGGFEPLELVQFGVKVENDYIGVNSGVMDQFAIEMGRANQATLLDTNTMKYEYLPVEMGDNVIVIMNTNKRRELADSKYNERRSECEKALAMLQKGIEVKSLGQLSEDEFDENTYLIYDPILIKRARHAVFENQRTLKASKALQDGDLKTFGKLVSASGVSLAFDYEVTGIELDTLVTNALKQRGVLGARMTGAGFGGCAIAIVNSADVEDFIDNVGKAYREKIGYDAHFYVADIADGAKQLN.

33 to 36 provides a ligand contact to substrate; that stretch reads EHTD. Residues S67 and 124–130 contribute to the ATP site; that span reads GAGLSSS. Mg(2+) contacts are provided by S130 and E162. D174 (proton acceptor) is an active-site residue. Substrate is bound at residue Y224.

It belongs to the GHMP kinase family. GalK subfamily.

It is found in the cytoplasm. The enzyme catalyses alpha-D-galactose + ATP = alpha-D-galactose 1-phosphate + ADP + H(+). It functions in the pathway carbohydrate metabolism; galactose metabolism. Catalyzes the transfer of the gamma-phosphate of ATP to D-galactose to form alpha-D-galactose-1-phosphate (Gal-1-P). This is Galactokinase from Lacticaseibacillus casei (strain BL23) (Lactobacillus casei).